Reading from the N-terminus, the 195-residue chain is Interferon tau-2 (195 aa).

The first 23 residues, 1 to 23 (MAFVLSLLMALVLVSYGPGGSLG), serve as a signal peptide directing secretion. Cystine bridges form between C24-C122 and C52-C162.

This sequence belongs to the alpha/beta interferon family. IFN-alphaII subfamily. In terms of tissue distribution, constitutively and exclusively expressed in the mononuclear cells of the extraembryonic trophectoderm.

Its subcellular location is the secreted. Its function is as follows. Paracrine hormone primarily responsible for maternal recognition of pregnancy. Interacts with endometrial receptors, probably type I interferon receptors, and blocks estrogen receptor expression, preventing the estrogen-induced increase in oxytocin receptor expression in the endometrium. This results in the suppression of the pulsatile endometrial release of the luteolytic hormone prostaglandin F2-alpha, hindering the regression of the corpus luteum (luteolysis) and therefore a return to ovarian cyclicity. This, and a possible direct effect of IFN-tau on prostaglandin synthesis, leads in turn to continued ovarian progesterone secretion, which stimulates the secretion by the endometrium of the nutrients required for the growth of the conceptus. In summary, displays particularly high antiviral and antiproliferative potency concurrently with particular weak cytotoxicity, high antiluteolytic activity and immunomodulatory properties. In contrast with other IFNs, IFN-tau is not virally inducible. This Ovis aries (Sheep) protein is Interferon tau-2 (IFNT2).